A 126-amino-acid chain; its full sequence is Aspartate 1-decarboxylase (126 aa).

The Schiff-base intermediate with substrate; via pyruvic acid role is filled by Ser25. Residue Ser25 is modified to Pyruvic acid (Ser). Thr57 lines the substrate pocket. Tyr58 acts as the Proton donor in catalysis. A substrate-binding site is contributed by 73 to 75 (GAA).

It belongs to the PanD family. In terms of assembly, heterooctamer of four alpha and four beta subunits. It depends on pyruvate as a cofactor. Is synthesized initially as an inactive proenzyme, which is activated by self-cleavage at a specific serine bond to produce a beta-subunit with a hydroxyl group at its C-terminus and an alpha-subunit with a pyruvoyl group at its N-terminus.

It localises to the cytoplasm. The enzyme catalyses L-aspartate + H(+) = beta-alanine + CO2. The protein operates within cofactor biosynthesis; (R)-pantothenate biosynthesis; beta-alanine from L-aspartate: step 1/1. In terms of biological role, catalyzes the pyruvoyl-dependent decarboxylation of aspartate to produce beta-alanine. The polypeptide is Aspartate 1-decarboxylase (Azotobacter vinelandii (strain DJ / ATCC BAA-1303)).